Reading from the N-terminus, the 426-residue chain is Enolase (426 aa).

Residue Gln-163 coordinates (2R)-2-phosphoglycerate. The active-site Proton donor is the Glu-205. Mg(2+) contacts are provided by Asp-242, Glu-283, and Asp-310. Lys-335, Arg-364, Ser-365, and Lys-386 together coordinate (2R)-2-phosphoglycerate. The active-site Proton acceptor is Lys-335.

Belongs to the enolase family. Mg(2+) is required as a cofactor.

Its subcellular location is the cytoplasm. It localises to the secreted. The protein localises to the cell surface. The enzyme catalyses (2R)-2-phosphoglycerate = phosphoenolpyruvate + H2O. The protein operates within carbohydrate degradation; glycolysis; pyruvate from D-glyceraldehyde 3-phosphate: step 4/5. In terms of biological role, catalyzes the reversible conversion of 2-phosphoglycerate (2-PG) into phosphoenolpyruvate (PEP). It is essential for the degradation of carbohydrates via glycolysis. The chain is Enolase from Clavibacter michiganensis subsp. michiganensis (strain NCPPB 382).